Reading from the N-terminus, the 542-residue chain is MAKMIVFNEEARRALEKGVNTLAEAVRVTLGPKGRNVVLEKKFGSPLITNDGVTIAKEIELENPIENMGAQLVKEVATKTNDVAGDGTTTATILAQAIIREGMKNVAAGANPMVLKRGIEKAVEKAVAEIKAIAKPVESKEAIAQVAAISAGDATIGNLIAEAMEKVGKDGVITVEESKGFTTDLEVVEGMNFDRGYISPYMITDPDKMEAVLNDPYILITDKKISSVKDILPVLERVVQSGKQMVIIAEDVEGEALATLVVNKLRGTFTCVAVKAPGFGDRRKAMLEDIAILTGGRVVSEEVGIKLDSATIDMLGRARQVRIKKEETIIVDGAGRADDIKARIAQIRRQHEESTSEFDKEKLQERLAKLAGGVAVIQVGAATETELKDKKLRIEDALNATRAAVEEGIVPGGGTALVSIQKALDNVETPAGDEATGVAIIRRALEEPLRQIANNAGYEGSVVVEKVKSLPVGQGFNAATEVYEDMIAAGIVDPAKVTRSALQNAASIAAMLLTTEAIVADKPEKKDAPAMSPGMGGMDMGM.

Residues 29 to 32 (TLGP), 86 to 90 (DGTTT), Gly-413, 477 to 479 (NAA), and Asp-493 contribute to the ATP site.

It belongs to the chaperonin (HSP60) family. Forms a cylinder of 14 subunits composed of two heptameric rings stacked back-to-back. Interacts with the co-chaperonin GroES.

It is found in the cytoplasm. It carries out the reaction ATP + H2O + a folded polypeptide = ADP + phosphate + an unfolded polypeptide.. Together with its co-chaperonin GroES, plays an essential role in assisting protein folding. The GroEL-GroES system forms a nano-cage that allows encapsulation of the non-native substrate proteins and provides a physical environment optimized to promote and accelerate protein folding. The protein is Chaperonin GroEL of Heliobacterium modesticaldum (strain ATCC 51547 / Ice1).